The sequence spans 956 residues: Protein translocase subunit SecA (956 aa).

ATP contacts are provided by residues Gln87, 105–109, and Asp524; that span reads GEGKT. Cys940, Cys942, Cys951, and His952 together coordinate Zn(2+).

This sequence belongs to the SecA family. As to quaternary structure, monomer and homodimer. Part of the essential Sec protein translocation apparatus which comprises SecA, SecYEG and auxiliary proteins SecDF-YajC and YidC. Zn(2+) serves as cofactor.

It localises to the cell inner membrane. The protein resides in the cytoplasm. The enzyme catalyses ATP + H2O + cellular proteinSide 1 = ADP + phosphate + cellular proteinSide 2.. In terms of biological role, part of the Sec protein translocase complex. Interacts with the SecYEG preprotein conducting channel. Has a central role in coupling the hydrolysis of ATP to the transfer of proteins into and across the cell membrane, serving both as a receptor for the preprotein-SecB complex and as an ATP-driven molecular motor driving the stepwise translocation of polypeptide chains across the membrane. The chain is Protein translocase subunit SecA from Beijerinckia indica subsp. indica (strain ATCC 9039 / DSM 1715 / NCIMB 8712).